Reading from the N-terminus, the 695-residue chain is Protein EARLY FLOWERING 3 (695 aa).

The span at 1-11 (MKRGKDEEKIL) shows a compositional bias: basic and acidic residues. Disordered stretches follow at residues 1 to 33 (MKRGKDEEKILEPMFPRLHVNDADKGGPRAPPR), 48 to 75 (RFGDHGTMNSRSNNTSTLVHPGPSSQPC), 136 to 159 (RSQSHGRTKSGIEKEKHTPMVAPS), 216 to 283 (EKSA…REYS), and 541 to 653 (CSSQ…QTTR). A compositionally biased stretch (polar residues) spans 54 to 74 (TMNSRSNNTSTLVHPGPSSQP). Composition is skewed to basic and acidic residues over residues 216–226 (EKSASSHDRVN), 234–253 (QESRNRLYRDGGKTRLKDTD), and 260–283 (LATENHSQEGHGSPEDIDNDREYS). An interaction with ELF3 region spans residues 261-484 (ATENHSQEGH…VMSPSEGLIY (224 aa)). 2 stretches are compositionally biased toward polar residues: residues 551–567 (PNEQMNQFGHPGNLQNT) and 579–588 (APQQQQQPTK). Low complexity-rich tracts occupy residues 598 to 616 (QGSTGSSPSGPQGISGSKS) and 636 to 653 (TMTTTTTTTRTTVTQTTR).

Interacts specifically with both Pr and Pfr forms of phytochrome B. Interacts with ELF4. May form a homodimer.

The protein localises to the nucleus. In terms of biological role, may be a transcription factor part of a circadian clock input pathway. Acts within a 'zeitnehmer' feedback loop and is involved in its own circadian regulation. Has no role in regulating circadian clock function in the dark. Part of a corepressor complex consisting of ELF4, ELF3, and LUX involved in the transcriptional regulation of APRR9. The activity of the protein may be decreased in long day conditions due to its interaction with phytochrome B (phyB). Can regulate the initiation of flowering independently of phyB. Also involved in responses to nematode parasitism, like the formation of the nematode feeding structure. The polypeptide is Protein EARLY FLOWERING 3 (ELF3) (Arabidopsis thaliana (Mouse-ear cress)).